The sequence spans 284 residues: RAD52 motif-containing protein 1 (284 aa).

The necessary for nuclear localization and for nucleolar accumulation in response to heat shock stretch occupies residues 1–92 (MAELVPFAVP…KQLFQKSPVK (92 aa)). In terms of domain architecture, RRM spans 15-98 (KTLLVWELSS…SPVKVRLGTR (84 aa)). Residues 90–133 (PVKVRLGTRHKAVQHQALALNSSRCQELANYYFGFNGWSKRIIK) form a necessary for nuclear and nucleolar localization region.

In terms of assembly, homodimer.

The protein resides in the nucleus. It is found in the cytoplasm. It localises to the nucleolus. Its subcellular location is the cajal body. The protein localises to the PML body. In terms of biological role, may confer resistance to the antitumor agent cisplatin. Binds to DNA and RNA. The chain is RAD52 motif-containing protein 1 (RDM1) from Macaca fascicularis (Crab-eating macaque).